The primary structure comprises 514 residues: Cilia- and flagella-associated protein 53 (514 aa).

2 coiled-coil regions span residues 91–176 (VINT…EKKV) and 205–478 (WEED…AGLA). Disordered stretches follow at residues 261–296 (QNKA…QDKI) and 495–514 (QALS…KPPL).

Belongs to the CFAP53 family. As to quaternary structure, microtubule inner protein component of sperm flagellar doublet microtubules. Interacts with PIERCE1 and PIERCE2; the interactions link outer dynein arms docking complex (ODA-DC) to the internal microtubule inner proteins (MIP) in cilium axoneme. Interacts with CCDC38. Interacts with CCDC42 and IFT88. Interacts with centriolar satellite proteins PIBF1/CEP90 and PCM1. Interacts with dyneins DNAIC1, DNAIC2 AND DNAH11 and with ODA-DC component ODAD4/TTC25. As to expression, expressed predominantly in testis (at protein level). In embryos at 8 dpc, specifically expressed in the node, in particular within the pit cells that are located at the center of the node and have rotating monocilia on their apical surface. In the adult, expressed in epithelial cells of the trachea, brain ventricles, oviduct and testis.

The protein resides in the cytoplasm. It is found in the cytoskeleton. Its subcellular location is the cilium axoneme. The protein localises to the flagellum axoneme. It localises to the microtubule organizing center. The protein resides in the centrosome. It is found in the centriolar satellite. Its subcellular location is the spindle pole. Its function is as follows. Microtubule inner protein (MIP) part of the dynein-decorated doublet microtubules (DMTs) in cilia axoneme, which is required for motile cilia beating. Regulates motility patterns of both 9+0 and 9+2 motile cilia through differential localization and recruitment of axonemal dynein components. Required for centriolar satellite integrity and non-motile cilium assembly. Required for motile cilium formation. Through its role in the beating of primary cilia, involved in the establishment of organ laterality during embryogenesis. Required for sperm flagellum biogenesis and is essential for male fertility. The sequence is that of Cilia- and flagella-associated protein 53 from Mus musculus (Mouse).